The primary structure comprises 824 residues: E3 ubiquitin-protein ligase TRIM71 (824 aa).

The RING-type zinc finger occupies 23 to 93 (CPLCKELCGC…PLKLRCPTCD (71 aa)). The segment at 37 to 56 (SSNSSTSSSSSQTSNSSSTS) is disordered. The B box-type 1; atypical zinc-finger motif lies at 147–194 (LSDPQCSSCDEGNPATSHCLDCQEYLCDNCVRAHQRVRLTKDHFIEGL). Zn(2+) is bound by residues Cys-152, Cys-155, Cys-176, His-180, Cys-234, His-237, Cys-257, and His-262. The segment at 229-270 (ERMDFCQHHDDAVLRFFCDSCTVPICRECSLGRHAGHSFTYL) adopts a B box-type 2 zinc-finger fold. Residues 293–321 (QAIQLSIEKAQAIAEQVELKAKVVQSEVK) adopt a coiled-coil conformation. The stretch at 435–536 (SSGAFATASK…IEGSPFKVMV (102 aa)) is one Filamin repeat. NHL repeat units lie at residues 549–592 (MASF…FKPC), 596–639 (HHKF…FTFD), 643–686 (LLKF…FGPD), 690–733 (LNKY…IRPD), 737–780 (ARFL…FEPN), and 784–824 (LCKF…ILMF).

The protein belongs to the TRIM/RBCC family.

It is found in the cytoplasm. The protein resides in the P-body. The catalysed reaction is S-ubiquitinyl-[E2 ubiquitin-conjugating enzyme]-L-cysteine + [acceptor protein]-L-lysine = [E2 ubiquitin-conjugating enzyme]-L-cysteine + N(6)-ubiquitinyl-[acceptor protein]-L-lysine.. It functions in the pathway protein modification; protein ubiquitination. E3 ubiquitin-protein ligase that cooperates with the microRNAs (miRNAs) machinery and promotes embryonic stem cells proliferation and maintenance. Binds to miRNAs and participates in post-transcriptional repression of transcripts. Required to maintain proliferation and prevent premature differentiation of neural progenitor cells during early neural development. In Danio rerio (Zebrafish), this protein is E3 ubiquitin-protein ligase TRIM71 (trim71).